Reading from the N-terminus, the 527-residue chain is Bifunctional purine biosynthesis protein PurH (527 aa).

One can recognise an MGS-like domain in the interval 1–149; it reads MASDFLPVRR…KNFARVAVAT (149 aa).

It belongs to the PurH family.

The enzyme catalyses (6R)-10-formyltetrahydrofolate + 5-amino-1-(5-phospho-beta-D-ribosyl)imidazole-4-carboxamide = 5-formamido-1-(5-phospho-D-ribosyl)imidazole-4-carboxamide + (6S)-5,6,7,8-tetrahydrofolate. The catalysed reaction is IMP + H2O = 5-formamido-1-(5-phospho-D-ribosyl)imidazole-4-carboxamide. It participates in purine metabolism; IMP biosynthesis via de novo pathway; 5-formamido-1-(5-phospho-D-ribosyl)imidazole-4-carboxamide from 5-amino-1-(5-phospho-D-ribosyl)imidazole-4-carboxamide (10-formyl THF route): step 1/1. The protein operates within purine metabolism; IMP biosynthesis via de novo pathway; IMP from 5-formamido-1-(5-phospho-D-ribosyl)imidazole-4-carboxamide: step 1/1. The polypeptide is Bifunctional purine biosynthesis protein PurH (Xanthomonas euvesicatoria pv. vesicatoria (strain 85-10) (Xanthomonas campestris pv. vesicatoria)).